Consider the following 469-residue polypeptide: GDP-fucose protein O-fucosyltransferase 2 (469 aa).

A signal peptide spans 1 to 18 (MKFIIVLLLFFFFKVIDR). Residues 56–60 (GEGFN), 277–279 (HLR), and 373–374 (RF) each bind GDP-beta-L-fucose. The active-site Proton acceptor is the E57.

This sequence belongs to the glycosyltransferase 68 family.

It is found in the endoplasmic reticulum. It catalyses the reaction L-seryl-[protein] + GDP-beta-L-fucose = 3-O-(alpha-L-fucosyl)-L-seryl-[protein] + GDP + H(+). The catalysed reaction is L-threonyl-[protein] + GDP-beta-L-fucose = 3-O-(alpha-L-fucosyl)-L-threonyl-[protein] + GDP + H(+). It participates in protein modification; protein glycosylation. In terms of biological role, catalyzes the reaction that attaches fucose through an O-glycosidic linkage to a conserved serine or threonine residue in the consensus sequence C1-X-X-S/T-C2 of thrombospondin type I repeats (TSRs) where C1 and C2 are the first and second cysteines of the repeat, respectively. O-fucosylates sporozoite proteins CSP and TRAP. O-fucosylation regulates stability and intracellular trafficking of TRAP but not of CSP. Probably by regulating protein O-fucosylation, may play a role in parasite transmission to the mosquito vector and/or infection of the vertebrate host hepatocytes; however, POFUT2 involvement in transmission/infection is controversial. This Plasmodium falciparum (isolate NF54) protein is GDP-fucose protein O-fucosyltransferase 2.